Here is a 366-residue protein sequence, read N- to C-terminus: Ribosomal RNA large subunit methyltransferase M (366 aa).

S-adenosyl-L-methionine contacts are provided by residues Ser-188, 221 to 224 (CPGG), Asp-240, Asp-260, and Asp-277. Lys-306 functions as the Proton acceptor in the catalytic mechanism.

It belongs to the class I-like SAM-binding methyltransferase superfamily. RNA methyltransferase RlmE family. RlmM subfamily. Monomer.

It localises to the cytoplasm. It carries out the reaction cytidine(2498) in 23S rRNA + S-adenosyl-L-methionine = 2'-O-methylcytidine(2498) in 23S rRNA + S-adenosyl-L-homocysteine + H(+). Catalyzes the 2'-O-methylation at nucleotide C2498 in 23S rRNA. This chain is Ribosomal RNA large subunit methyltransferase M, found in Photorhabdus sp. (strain Az29).